We begin with the raw amino-acid sequence, 295 residues long: Small ribosomal subunit protein uS2 (295 aa).

This sequence belongs to the universal ribosomal protein uS2 family.

In Rickettsia canadensis (strain McKiel), this protein is Small ribosomal subunit protein uS2.